A 488-amino-acid chain; its full sequence is Ribulose bisphosphate carboxylase large chain (488 aa).

Positions 127 and 177 each coordinate substrate. Lys179 functions as the Proton acceptor in the catalytic mechanism. Lys181 provides a ligand contact to substrate. Mg(2+) is bound by residues Lys205, Asp207, and Glu208. Lys205 carries the post-translational modification N6-carboxylysine. His297 functions as the Proton acceptor in the catalytic mechanism. Arg298, His330, and Ser382 together coordinate substrate.

This sequence belongs to the RuBisCO large chain family. Type I subfamily. As to quaternary structure, heterohexadecamer of 8 large chains and 8 small chains. The cofactor is Mg(2+).

It localises to the plastid. The protein localises to the chloroplast. The enzyme catalyses 2 (2R)-3-phosphoglycerate + 2 H(+) = D-ribulose 1,5-bisphosphate + CO2 + H2O. It carries out the reaction D-ribulose 1,5-bisphosphate + O2 = 2-phosphoglycolate + (2R)-3-phosphoglycerate + 2 H(+). RuBisCO catalyzes two reactions: the carboxylation of D-ribulose 1,5-bisphosphate, the primary event in carbon dioxide fixation, as well as the oxidative fragmentation of the pentose substrate in the photorespiration process. Both reactions occur simultaneously and in competition at the same active site. The chain is Ribulose bisphosphate carboxylase large chain from Rhodomonas salina (Cryptomonas salina).